Here is an 880-residue protein sequence, read N- to C-terminus: Alanine--tRNA ligase (880 aa).

Zn(2+)-binding residues include His-568, His-572, Cys-670, and His-674.

The protein belongs to the class-II aminoacyl-tRNA synthetase family. Zn(2+) is required as a cofactor.

It is found in the cytoplasm. The catalysed reaction is tRNA(Ala) + L-alanine + ATP = L-alanyl-tRNA(Ala) + AMP + diphosphate. Catalyzes the attachment of alanine to tRNA(Ala) in a two-step reaction: alanine is first activated by ATP to form Ala-AMP and then transferred to the acceptor end of tRNA(Ala). Also edits incorrectly charged Ser-tRNA(Ala) and Gly-tRNA(Ala) via its editing domain. The protein is Alanine--tRNA ligase of Ligilactobacillus salivarius (strain UCC118) (Lactobacillus salivarius).